The following is a 218-amino-acid chain: Probable GTP-binding protein EngB (218 aa).

Residues 31–205 form the EngB-type G domain; sequence SGIEIAFAGR…EQKVTSWYAQ (175 aa). GTP-binding positions include 39–46, 66–70, 84–87, 151–154, and 184–186; these read GRSNAGKS, GRTQL, DLPG, TKAD, and FSS. Mg(2+) is bound by residues serine 46 and threonine 68.

The protein belongs to the TRAFAC class TrmE-Era-EngA-EngB-Septin-like GTPase superfamily. EngB GTPase family. Mg(2+) is required as a cofactor.

Necessary for normal cell division and for the maintenance of normal septation. This Psychromonas ingrahamii (strain DSM 17664 / CCUG 51855 / 37) protein is Probable GTP-binding protein EngB.